The sequence spans 173 residues: Co-chaperone protein HscB homolog (173 aa).

A J domain is found at 5-77 (CHFALFELKP…PKRARYLLAM (73 aa)).

Belongs to the HscB family. Interacts with HscA and stimulates its ATPase activity.

Co-chaperone involved in the maturation of iron-sulfur cluster-containing proteins. Seems to help targeting proteins to be folded toward HscA. The chain is Co-chaperone protein HscB homolog from Pseudomonas syringae pv. tomato (strain ATCC BAA-871 / DC3000).